The primary structure comprises 465 residues: 2-methylcitrate synthase, mitochondrial (465 aa).

Residues Arg72 and Lys190 each contribute to the CoA site. His265 provides a ligand contact to oxaloacetate. Leu300 contacts CoA. Residue His301 is part of the active site. CoA-binding residues include Val342, Gly344, and Tyr345. Positions 347 and 356 each coordinate oxaloacetate. Residue His347 is part of the active site. Residues Thr394, Lys395, and Asn400 each coordinate CoA. The active site involves Asp402. Oxaloacetate is bound by residues Arg428 and Arg448.

This sequence belongs to the citrate synthase family. As to quaternary structure, homodimer.

It is found in the mitochondrion matrix. It catalyses the reaction propanoyl-CoA + oxaloacetate + H2O = (2S,3S)-2-methylcitrate + CoA + H(+). The catalysed reaction is oxaloacetate + acetyl-CoA + H2O = citrate + CoA + H(+). The protein operates within organic acid metabolism; propanoate degradation. Activity is inhibited by p-chloromercuribenzoate (pCMB), monoiodoacetamide, H(2)O(2), ATP, ADP, NADH, NADPH, Hg(2+) and Zn(2+). In terms of biological role, component of the methylcitrate cycle that catalyzes the synthesis of (2S,3S)-2-methylcitrate from propionyl-CoA and oxaloacetate. Plays an important role in detoxification of propionyl-CoA, an inhibitor of both primary and secondary metabolism. Also has citrate synthase activity using as substrates acetyl-CoA and oxaloacetate. This is 2-methylcitrate synthase, mitochondrial from Yarrowia lipolytica (strain CLIB 122 / E 150) (Yeast).